We begin with the raw amino-acid sequence, 378 residues long: Stimulator of interferon genes protein (378 aa).

Topologically, residues 1-17 are cytoplasmic; it reads MPYSNLHPAIPRPRGHR. Residues 1–189 are mediates interaction with ZDHHC1 and ZDHHC11; it reads MPYSNLHPAI…MFNQLHNNML (189 aa). The helical transmembrane segment at 18–34 threads the bilayer; the sequence is SKYVALIFLVASLMILW. Lys19 is covalently cross-linked (Glycyl lysine isopeptide (Lys-Gly) (interchain with G-Cter in ubiquitin)). Residues 35–44 lie on the Lumenal side of the membrane; sequence VAKDPPNHTL. The chain crosses the membrane as a helical span at residues 45-69; it reads KYLALHLASHELGLLLKNLCCLAEE. Topologically, residues 70–91 are cytoplasmic; it reads LCHVQSRYQGSYWKAVRACLGC. Residues Cys88 and Cys91 are each lipidated (S-palmitoyl cysteine). Residues 92–106 traverse the membrane as a helical segment; it reads PIHCMAMILLSSYFY. Residues 107–115 lie on the Lumenal side of the membrane; it reads FLQNTADIY. A helical membrane pass occupies residues 116–133; sequence LSWMFGLLVLYKSLSMLL. The Cytoplasmic portion of the chain corresponds to 134–378; the sequence is GLQSLTPAEV…QPLPLRTDLI (245 aa). Lys150 is covalently cross-linked (Glycyl lysine isopeptide (Lys-Gly) (interchain with G-Cter in ubiquitin)). The tract at residues 152-339 is cyclic dinucleotide-binding domain (CBD); that stretch reads LNVAHGLAWS…RHIRQEEKEE (188 aa). Gly165 provides a ligand contact to 3',3'-c-di-GMP. Tyr166 provides a ligand contact to 2',3'-cUAMP. Tyr166 serves as a coordination point for 3',3'-cGAMP. Lys235 is covalently cross-linked (Glycyl lysine isopeptide (Lys-Gly) (interchain with G-Cter in ubiquitin)). Arg237 serves as a coordination point for 2',3'-cUAMP. Arg237 contacts 3',3'-cGAMP. Arg237 contributes to the 2',3'-cGAMP binding site. Residues 237–240 and Thr262 contribute to the 3',3'-c-di-GMP site; that span reads RVYS. The residue at position 240 (Ser240) is a Phosphoserine. A 2',3'-cUAMP-binding site is contributed by Thr262. A 2',3'-cGAMP-binding site is contributed by Thr262. Lys337 is covalently cross-linked (Glycyl lysine isopeptide (Lys-Gly) (interchain with G-Cter in SUMO)). Residues 339–378 are C-terminal tail (CTT); it reads EVTMNAPMTSVAPPPSVLSQEPRLLISGMDQPLPLRTDLI. Ser354 is modified (phosphoserine; by MAP3K7). Residues Ser357 and Ser365 each carry the phosphoserine; by TBK1 modification. The short motif at 362–365 is the pLxIS motif element; it reads LLIS.

The protein belongs to the STING family. Homodimer; forms a homodimer in absence of cyclic nucleotide (c-di-GMP or cGAMP); 'Lys-63'-linked ubiquitination at Lys-150 is required for homodimerization. Homotetramer; in presence of cyclic nucleotide (c-di-GMP or cGAMP), forms tetramers and higher-order oligomers through side-by-side packing. Interacts (when phosphorylated) with IRF3; following activation and phosphorylation on the pLxIS motif by TBK1, recruits IRF3. Interacts with RIGI, MAVS and SSR2. Interacts with RNF5 and TRIM56. Interacts with TBK1; when homodimer, leading to subsequent production of IFN-beta. Interacts with IFIT1 and IFIT2. Interacts with TRIM29; this interaction induces STING1 ubiquitination and subsequent degradation. Associates with the MHC-II complex. Interacts with STEEP1; interaction takes place upon cGAMP-activation and STING1 phosphorylation by MAP3K7/TAK1 and promotes STING1 translocation to COPII vesicles. Interacts with SEC24A, SEC24B and SEC24C; promoting translocation to COPII vesicles. Interacts (when ubiquitinated) with SQSTM1; leading to relocalization to autophagosomes. Interacts with SURF4. Interacts with HNRNPA2B1. Interacts with ZDHHC1; ZDHHC1 constitutively interacts with STING1 and in presence of DNA viruses activates it by promoting its cGAMP-induced oligomerization and the recruitment of downstream signaling components. Interacts with ZDHHC11; in presence of DNA viruses promotes the recruitment of IRF3 to STING1. Interacts with TOMM70. Interacts with IFI204. Interacts with TAB1; promoting recruitment of TAB1 to the endoplasmic reticulum membrane and subsequent activation of MAP3K7/TAK1. Interacts (via transmembrane domain) with TMEM203. Interacts with DDX41. Post-translationally, phosphorylation by TBK1 leads to activation and production of IFN-beta. Following cyclic nucleotide (c-di-GMP or cGAMP)-binding, activation and translocation from the endoplasmic reticulum, STING1 is phosphorylated by TBK1 at Ser-365 in the pLxIS motif. The phosphorylated pLxIS motif constitutes an IRF3-binding motif, leading to recruitment of the transcription factor IRF3 to induce type-I interferons and other cytokines. The phosphorylated pLxIS motif facilitates SENP2 recruitment during late phase of viral infection. Phosphorylated on tyrosine residues upon MHC-II aggregation. Dephosphorylation by PPP6C leads to inactivation and decreased production of IFN-beta. Phosphorylation at Ser-357 is also required to activate IRF3. Phosphorylation at Ser-354 by MAP3K7/TAK1 facilitates its interaction with STEEP1, promoting STING1 translocation to COPII vesicles. In terms of processing, ubiquitinated. Ubiquitinated via 'Lys-63'-linked ubiquitin chains in response to double-stranded DNA treatment, leading to relocalization to autophagosomes and subsequent degradation; this process is dependent on SQSTM1. 'Lys-63'-linked ubiquitination mediated by TRIM56 at Lys-150 promotes homodimerization and recruitment of the antiviral kinase TBK1 and subsequent production of IFN-beta. 'Lys-48'-linked polyubiquitination at Lys-150 occurring after viral infection is mediated by RNF5 and leads to proteasomal degradation. 'Lys-11'-linked polyubiquitination at Lys-150 by RNF26 leads to stabilize STING1: it protects STING1 from RNF5-mediated 'Lys-48'-linked polyubiquitination. 'Lys-33'-linked and 'Lys-48'-linked deubiquitinated by USP20; leading to its stabilization and promotion of innate antiviral response. 'Lys-48'-linked deubiquitinated by USP44; leading to its stabilization and promotion of innate antiviral response. Deubiquitinated by USP13; leading to inhibition of innate antiviral response. 'Lys-63'-linked deubiquitinated by USP49; leading to inhibition of the subsequent recruitment of TBK1 to the signaling complex. 'Lys-63'-linked ubiquitination mediated by RNF39 promotes the activation of the cGAS-STING pathway. MARCHF5-mediated ubiquitination prevents the oxidation-induced polymer formation. Sumoylated at Lys-337 by TRIM38 during the early phase of viral infection, promoting its stability by preventing its relocalization to autophagosomes and subsequent degradation. Desumoylated by SENP2 during the late phase of viral infection. Post-translationally, palmitoylation takes place in the Golgi apparatus and creates a platform for the recruitment of TBK1. As to expression, present in spleen and thymus tissue. Also present in dendritic cells (at protein level).

The protein localises to the endoplasmic reticulum membrane. Its subcellular location is the cytoplasm. It is found in the perinuclear region. The protein resides in the endoplasmic reticulum-Golgi intermediate compartment membrane. It localises to the golgi apparatus membrane. The protein localises to the cytoplasmic vesicle. Its subcellular location is the autophagosome membrane. It is found in the mitochondrion outer membrane. The protein resides in the cell membrane. It localises to the lysosome membrane. It catalyses the reaction H(+)(in) = H(+)(out). Activated by anticancer drug 5,6-dimethylxanthenone 4-acetic acid (DMXAA). Specifically inhibited by nitrofuran derivatives C-178 and C-176, which covalently bind Cys-91 and prevent palmitoylation and subsequent activation od STING1. In terms of biological role, facilitator of innate immune signaling that acts as a sensor of cytosolic DNA from bacteria and viruses and promotes the production of type I interferon (IFN-alpha and IFN-beta). Innate immune response is triggered in response to non-CpG double-stranded DNA from viruses and bacteria delivered to the cytoplasm. Acts by binding cyclic dinucleotides: recognizes and binds cyclic di-GMP (c-di-GMP), a second messenger produced by bacteria, cyclic UMP-AMP (2',3'-cUAMP), and cyclic GMP-AMP (cGAMP), a messenger produced by CGAS in response to DNA virus in the cytosol. Upon binding to c-di-GMP, cUAMP or cGAMP, STING1 oligomerizes, translocates from the endoplasmic reticulum and is phosphorylated by TBK1 on the pLxIS motif, leading to recruitment and subsequent activation of the transcription factor IRF3 to induce expression of type I interferon and exert a potent anti-viral state. Exhibits 2',3' phosphodiester linkage-specific ligand recognition: can bind both 2'-3' linked cGAMP (2'-3'-cGAMP) and 3'-3' linked cGAMP but is preferentially activated by 2'-3' linked cGAMP. The preference for 2'-3'-cGAMP, compared to other linkage isomers is probably due to the ligand itself, whichs adopts an organized free-ligand conformation that resembles the STING1-bound conformation and pays low energy costs in changing into the active conformation. In addition to promote the production of type I interferons, plays a direct role in autophagy. Following cGAMP-binding, STING1 buds from the endoplasmic reticulum into COPII vesicles, which then form the endoplasmic reticulum-Golgi intermediate compartment (ERGIC). The ERGIC serves as the membrane source for WIPI2 recruitment and LC3 lipidation, leading to formation of autophagosomes that target cytosolic DNA or DNA viruses for degradation by the lysosome. Promotes autophagy by acting as a proton channel that directs proton efflux from the Golgi to facilitate MAP1LC3B/LC3B lipidation. The autophagy- and interferon-inducing activities can be uncoupled and autophagy induction is independent of TBK1 phosphorylation. Autophagy is also triggered upon infection by bacteria: following c-di-GMP-binding, which is produced by live Gram-positive bacteria, promotes reticulophagy. May be involved in translocon function, the translocon possibly being able to influence the induction of type I interferons. May be involved in transduction of apoptotic signals via its association with the major histocompatibility complex class II (MHC-II). The chain is Stimulator of interferon genes protein from Mus musculus (Mouse).